Here is a 115-residue protein sequence, read N- to C-terminus: MNFKKTVVSALSISALALSVSGVASAHEINSTPTEVKNISISPTHVIKIQDYNLPLKVGETYSVKNNSATRYWTDNQKVAEVDQNGLVTAKSKGKATITLFKGTAVFGKVYVTVY.

The signal sequence occupies residues 1-26 (MNFKKTVVSALSISALALSVSGVASA). The 79-residue stretch at 36–114 (VKNISISPTH…AVFGKVYVTV (79 aa)) folds into the BIG2 domain.

This is an uncharacterized protein from Bacillus subtilis (strain 168).